A 1832-amino-acid chain; its full sequence is Putative transcription factor capicua (1832 aa).

2 positions are modified to phosphoserine: S41 and S49. Disordered regions lie at residues A66–S121, S135–H227, Q323–N353, N389–R427, D444–P493, D563–G619, R690–E739, Q784–P845, P874–E938, T1069–C1105, G1151–T1178, D1457–A1602, Q1632–L1668, L1701–V1733, and A1789–S1817. Residues N96 to S121 are compositionally biased toward low complexity. Pro residues predominate over residues P172–P186. Low complexity-rich tracts occupy residues P187–S203, Q211–Q223, and Q323–Q342. A compositionally biased stretch (acidic residues) spans E397 to F408. Polar residues predominate over residues E409 to Q422. The segment covering A446 to Q484 has biased composition (low complexity). Positions I490–K558 form a DNA-binding region, HMG box. Gly residues predominate over residues G610–G619. Residues G834–Y1832 are interaction with gro. Residues E903–D914 show a composition bias toward basic and acidic residues. A compositionally biased stretch (acidic residues) spans Q915 to E938. Over residues N1078 to F1091 the composition is skewed to polar residues. Positions P1092–C1105 are enriched in low complexity. Positions G1462–G1471 are enriched in low complexity. Positions L1503–H1525 are enriched in polar residues. A compositionally biased stretch (low complexity) spans N1547–P1589. T1716 carries the phosphothreonine modification. The span at D1724–V1733 shows a compositional bias: basic and acidic residues. The segment covering A1789–N1799 has biased composition (polar residues). Residues T1800–S1817 are compositionally biased toward low complexity.

Interacts with gro. Expressed in the central region of embryos. Also expressed in ovarian follicle cells, the wing imaginal disks and the wing pouch.

Its subcellular location is the nucleus. Transcriptional repressor required for the specification of numerous cell types during embryonic development. Required for terminal patterning of early embryos. May associate with gro to repress tll and hkb, restricting their expression to embryonic terminal poles where they initiate correct development of head and tail structures. Required for dorsoventral patterning of oocytes and early embryos. Cooperates with dl to repress zen and other dorsal specific genes within the embryo and promotes expression of the ventralizing factor pip in ovarian follicle cells. Required during wing development for the specification of intervein areas, where it mediates localized repression of vein specific genes such as aos, dpp and vvl. This Drosophila melanogaster (Fruit fly) protein is Putative transcription factor capicua (cic).